We begin with the raw amino-acid sequence, 307 residues long: N-acetylglucosaminyl-diphospho-decaprenol L-rhamnosyltransferase (307 aa).

Belongs to the glycosyltransferase 2 family. Mn(2+) serves as cofactor. It depends on Mg(2+) as a cofactor.

The enzyme catalyses N-acetyl-alpha-D-glucosaminyl-1-diphospho-trans,octa-cis-decaprenol + dTDP-beta-L-rhamnose = alpha-L-rhamnosyl-(1-&gt;3)-N-acetyl-alpha-D-glucosaminyl-diphospho-trans,octa-cis-decaprenol + dTDP + H(+). Its function is as follows. Involved in the biosynthesis of the mycolylarabinogalactan-peptidoglycan (mAGP) complex, an essential component of the mycobacterial cell wall. Catalyzes the transfer of the rhamnosyl moiety from dTDP-rhamnosyl (dTDP-Rha) onto the decaprenyl-pyrophosphoryl-GlcNAc (C50-PP-GlcNAc), yielding rhamnosyl-decaprenyl-pyrophosphoryl-GlcNAc (Rha-C50-PP-GlcNAc). This Mycobacterium tuberculosis (strain CDC 1551 / Oshkosh) protein is N-acetylglucosaminyl-diphospho-decaprenol L-rhamnosyltransferase (wbbL).